A 355-amino-acid chain; its full sequence is Protein-glutamate methylesterase/protein-glutamine glutaminase (355 aa).

In terms of domain architecture, Response regulatory spans alanine 7–glutamate 123. Aspartate 57 carries the 4-aspartylphosphate modification. The tract at residues threonine 139 to alanine 159 is disordered. In terms of domain architecture, CheB-type methylesterase spans glutamate 161–glutamate 355. Active-site residues include serine 173, histidine 200, and aspartate 297.

It belongs to the CheB family. In terms of processing, phosphorylated by CheA. Phosphorylation of the N-terminal regulatory domain activates the methylesterase activity.

It is found in the cytoplasm. The enzyme catalyses [protein]-L-glutamate 5-O-methyl ester + H2O = L-glutamyl-[protein] + methanol + H(+). It carries out the reaction L-glutaminyl-[protein] + H2O = L-glutamyl-[protein] + NH4(+). In terms of biological role, involved in chemotaxis. Part of a chemotaxis signal transduction system that modulates chemotaxis in response to various stimuli. Catalyzes the demethylation of specific methylglutamate residues introduced into the chemoreceptors (methyl-accepting chemotaxis proteins or MCP) by CheR. Also mediates the irreversible deamidation of specific glutamine residues to glutamic acid. This is Protein-glutamate methylesterase/protein-glutamine glutaminase from Natronomonas pharaonis (strain ATCC 35678 / DSM 2160 / CIP 103997 / JCM 8858 / NBRC 14720 / NCIMB 2260 / Gabara) (Halobacterium pharaonis).